A 276-amino-acid chain; its full sequence is Large ribosomal subunit protein uL2 (276 aa).

The segment at 208–276 is disordered; the sequence is KAGRNRHRGI…KLIISRRKGK (69 aa). The span at 230–240 shows a compositional bias: basic and acidic residues; the sequence is DHPHGGGEGKK. The segment covering 255–276 has biased composition (basic residues); the sequence is KGAKTRRKKASDKLIISRRKGK.

This sequence belongs to the universal ribosomal protein uL2 family. Part of the 50S ribosomal subunit. Forms a bridge to the 30S subunit in the 70S ribosome.

Functionally, one of the primary rRNA binding proteins. Required for association of the 30S and 50S subunits to form the 70S ribosome, for tRNA binding and peptide bond formation. It has been suggested to have peptidyltransferase activity; this is somewhat controversial. Makes several contacts with the 16S rRNA in the 70S ribosome. This Campylobacter lari (strain RM2100 / D67 / ATCC BAA-1060) protein is Large ribosomal subunit protein uL2.